The chain runs to 187 residues: Ribosome-recycling factor (187 aa).

Belongs to the RRF family.

The protein resides in the cytoplasm. Functionally, responsible for the release of ribosomes from messenger RNA at the termination of protein biosynthesis. May increase the efficiency of translation by recycling ribosomes from one round of translation to another. The polypeptide is Ribosome-recycling factor (Bradyrhizobium sp. (strain ORS 278)).